The chain runs to 30 residues: Nattererin-2 (30 aa).

As to expression, expressed by the skin glands.

It localises to the secreted. In terms of biological role, probably has antibacterial activity. The sequence is that of Nattererin-2 from Physalaemus nattereri (Cuyaba dwarf frog).